The chain runs to 359 residues: DNA replication and repair protein RecF (359 aa).

30–37 (GPNGSGKT) serves as a coordination point for ATP.

This sequence belongs to the RecF family.

It is found in the cytoplasm. Functionally, the RecF protein is involved in DNA metabolism; it is required for DNA replication and normal SOS inducibility. RecF binds preferentially to single-stranded, linear DNA. It also seems to bind ATP. This chain is DNA replication and repair protein RecF, found in Vibrio vulnificus (strain CMCP6).